The primary structure comprises 466 residues: Phytase A (466 aa).

An N-terminal signal peptide occupies residues 1–19 (MGFLAIVLSVALLFRSTSG). An intrachain disulfide couples cysteine 31 to cysteine 40. 1D-myo-inositol hexakisphosphate contacts are provided by tyrosine 51, arginine 81, histidine 82, arginine 85, and threonine 88. Intrachain disulfides connect cysteine 71–cysteine 414, cysteine 215–cysteine 465, cysteine 264–cysteine 282, and cysteine 436–cysteine 444. Histidine 82 serves as the catalytic Nucleophile. N-linked (GlcNAc...) asparagine glycosylation occurs at asparagine 120. Arginine 165 contacts 1D-myo-inositol hexakisphosphate. Asparagine 207 and asparagine 230 each carry an N-linked (GlcNAc...) asparagine glycan. Position 301 (lysine 301) interacts with 1D-myo-inositol hexakisphosphate. Residues asparagine 339 and asparagine 352 are each glycosylated (N-linked (GlcNAc...) asparagine). Positions 361 and 362 each coordinate 1D-myo-inositol hexakisphosphate. Asparagine 376 carries N-linked (GlcNAc...) asparagine glycosylation.

It belongs to the histidine acid phosphatase family. As to quaternary structure, monomer.

The protein resides in the secreted. The catalysed reaction is 1D-myo-inositol hexakisphosphate + H2O = 1D-myo-inositol 1,2,4,5,6-pentakisphosphate + phosphate. The enzyme catalyses 1D-myo-inositol 1,2,4,5,6-pentakisphosphate + H2O = 1D-myo-inositol 1,2,5,6-tetrakisphosphate + phosphate. It catalyses the reaction 1D-myo-inositol 1,2,5,6-tetrakisphosphate + H2O = 1D-myo-inositol 1,2,6-trisphosphate + phosphate. It carries out the reaction 1D-myo-inositol 1,2,6-trisphosphate + H2O = 1D-myo-inositol 1,2-bisphosphate + phosphate. The catalysed reaction is 1D-myo-inositol 1,2-bisphosphate + H2O = 1D-myo-inositol 2-phosphate + phosphate. Catalyzes the phosphate monoester hydrolysis of phytic acid (myo-inositol hexakisphosphate), which results in the stepwise formation of myo-inositol pentakis-, tetrakis-, tris-, bis-, and monophosphates, as well as the liberation of inorganic phosphate. Myo-inositol 2-monophosphate is the end product. Has a broad substrate specificity and is also able to dephosphorylate other classic acid phosphatase substrates such as p-nitrophenyl phosphate, phenyl phosphate, fructose 1,6-bisphosphate, glucose 6-phosphate, 3-phosphoglycerate, as well as ADP and ATP. In Aspergillus terreus, this protein is Phytase A.